The primary structure comprises 293 residues: Formamidopyrimidine-DNA glycosylase (293 aa).

The Schiff-base intermediate with DNA role is filled by Pro-2. Residue Glu-3 is the Proton donor of the active site. The active-site Proton donor; for beta-elimination activity is Lys-58. The DNA site is built by His-104, Arg-123, and Arg-166. The FPG-type zinc-finger motif lies at 257–293; the sequence is KVYDREGEPCPTLRCKGHVQRIVQAGRSTFFCATCQR. Arg-283 acts as the Proton donor; for delta-elimination activity in catalysis.

This sequence belongs to the FPG family. As to quaternary structure, monomer. It depends on Zn(2+) as a cofactor.

It catalyses the reaction Hydrolysis of DNA containing ring-opened 7-methylguanine residues, releasing 2,6-diamino-4-hydroxy-5-(N-methyl)formamidopyrimidine.. The enzyme catalyses 2'-deoxyribonucleotide-(2'-deoxyribose 5'-phosphate)-2'-deoxyribonucleotide-DNA = a 3'-end 2'-deoxyribonucleotide-(2,3-dehydro-2,3-deoxyribose 5'-phosphate)-DNA + a 5'-end 5'-phospho-2'-deoxyribonucleoside-DNA + H(+). In terms of biological role, involved in base excision repair of DNA damaged by oxidation or by mutagenic agents. Acts as a DNA glycosylase that recognizes and removes damaged bases. Has a preference for oxidized purines, such as 7,8-dihydro-8-oxoguanine (8-oxoG). Has AP (apurinic/apyrimidinic) lyase activity and introduces nicks in the DNA strand. Cleaves the DNA backbone by beta-delta elimination to generate a single-strand break at the site of the removed base with both 3'- and 5'-phosphates. The protein is Formamidopyrimidine-DNA glycosylase of Azorhizobium caulinodans (strain ATCC 43989 / DSM 5975 / JCM 20966 / LMG 6465 / NBRC 14845 / NCIMB 13405 / ORS 571).